A 382-amino-acid chain; its full sequence is Homeobox protein SHOOT MERISTEMLESS (382 aa).

The interval 26-59 (MMMMMPPIMTSHQHHGHDHQHQQQEHDGYAYQSH) is disordered. Over residues 44 to 53 (HQHQQQEHDG) the composition is skewed to basic and acidic residues. The 21-residue stretch at 262–282 (ELKGQLLRKYSGYLGSLKQEF) folds into the ELK domain. Positions 283 to 346 (MKKRKKGKLP…NQRKRHWKPS (64 aa)) form a DNA-binding region, homeobox; TALE-type.

The protein belongs to the TALE/KNOX homeobox family. In terms of assembly, forms homodimers. May form heterodimeric complexes with TALE/BELL proteins BEL1, BLH2, BLH3, BLH8/PNF, BLH9/PNY and ATH1. Interacts with CCT8. Binds to MBP2C; this interaction reduces RNA binding capacity. Interacts with FTIP3 and FTIP4. In terms of tissue distribution, expressed in all four types of shoot apical meristems (SAM) i.e. in vegetative, axillary, inflorescence and floral.

Its subcellular location is the nucleus. The protein localises to the cell junction. It localises to the plasmodesma. The protein resides in the cytoplasm. It is found in the endosome. Its subcellular location is the cell membrane. In terms of biological role, required for shoot apical meristem (SAM) formation during embryogenesis. Negatively regulates ASYMMETRIC LEAVES1 (AS1) and ASYMMETRIC LEAVES2 (AS2 or LBD6). Probably binds to the DNA sequence 5'-TGAC-3'. Binds to RNA. This is Homeobox protein SHOOT MERISTEMLESS from Arabidopsis thaliana (Mouse-ear cress).